The sequence spans 206 residues: Ribosome maturation factor RimP (206 aa).

This sequence belongs to the RimP family.

It localises to the cytoplasm. Functionally, required for maturation of 30S ribosomal subunits. The sequence is that of Ribosome maturation factor RimP from Paracoccus denitrificans (strain Pd 1222).